Consider the following 348-residue polypeptide: Chlorophyll(ide) b reductase NOL, chloroplastic (348 aa).

Residues methionine 1–serine 61 constitute a chloroplast transit peptide. Isoleucine 84–isoleucine 108 provides a ligand contact to NAD(+). Tyrosine 233 acts as the Proton acceptor in catalysis.

This sequence belongs to the short-chain dehydrogenases/reductases (SDR) family. In terms of assembly, interacts with NCY1 to form a complex that acts as a chlorophyll b reductase. Interacts with HCAR, RCCR and the LHCII complex. Part of a SGR1-CCE-LHCII complex, which acts in chlorophyll breakdown.

It localises to the plastid. It is found in the chloroplast thylakoid membrane. The catalysed reaction is 7(1)-hydroxychlorophyllide a + NAD(+) = chlorophyllide b + NADH + H(+). It catalyses the reaction 7(1)-hydroxychlorophyllide a + NADP(+) = chlorophyllide b + NADPH + H(+). Its function is as follows. Required for chlorophyll b degradation. Chlorophyll b, chlorophyllide b, pheophorbide b and pheophytin b can be used as substrates. Belongs to the chlorophyll catabolic enzymes (CCEs). This Arabidopsis thaliana (Mouse-ear cress) protein is Chlorophyll(ide) b reductase NOL, chloroplastic (NOL).